The following is a 76-amino-acid chain: Conotoxin Ca11b (76 aa).

The N-terminal stretch at 1 to 19 (MKLVLAIVVILMLLSLSTG) is a signal peptide. A propeptide spanning residues 20-42 (AEMSDNHASMSANALRDRLLGPK) is cleaved from the precursor. Disulfide bonds link Cys-46-Cys-60, Cys-53-Cys-65, Cys-59-Cys-69, and Cys-64-Cys-76.

As to expression, expressed by the venom duct.

The protein localises to the secreted. This is Conotoxin Ca11b from Conus caracteristicus (Characteristic cone).